A 501-amino-acid chain; its full sequence is Beta-secretase 1 (501 aa).

The first 21 residues, 1–21, serve as a signal peptide directing secretion; sequence MAPALHWLLLWVGSGMLPAQG. A propeptide spanning residues 22–45 is cleaved from the precursor; the sequence is THLGIRLPLRSGLAGPPLGLRLPR. The Extracellular portion of the chain corresponds to 22–457; the sequence is THLGIRLPLR…PQTDESTLMT (436 aa). The disordered stretch occupies residues 39–58; that stretch reads LGLRLPRETDEESEEPGRRG. Residues 75-416 enclose the Peptidase A1 domain; it reads YYVEMTVGSP…DRARKRIGFA (342 aa). The active site involves Asp-93. At Lys-126 the chain carries N6-acetyllysine. Residues Asn-153, Asn-172, and Asn-223 are each glycosylated (N-linked (GlcNAc...) asparagine). Intrachain disulfides connect Cys-216/Cys-420, Cys-278/Cys-443, and Cys-330/Cys-380. 3 positions are modified to N6-acetyllysine: Lys-275, Lys-279, and Lys-285. The active site involves Asp-289. N6-acetyllysine is present on residues Lys-299, Lys-300, and Lys-307. The N-linked (GlcNAc...) asparagine glycan is linked to Asn-354. A helical transmembrane segment spans residues 458–478; it reads IAYVMAAICALFMLPLCLMVC. S-palmitoyl cysteine attachment occurs at residues Cys-474, Cys-478, Cys-482, and Cys-485. Residues 479–501 lie on the Cytoplasmic side of the membrane; the sequence is QWRCLRCLRHQHDDFADDISLLK. The interval 479 to 501 is interaction with RTN3; it reads QWRCLRCLRHQHDDFADDISLLK. A DXXLL motif is present at residues 496–500; it reads DISLL. Ser-498 is subject to Phosphoserine. A Glycyl lysine isopeptide (Lys-Gly) (interchain with G-Cter in ubiquitin) cross-link involves residue Lys-501.

Belongs to the peptidase A1 family. In terms of assembly, monomer. Interacts (via DXXLL motif) with GGA1, GGA2 and GGA3 (via their VHS domain); the interaction highly increases when BACE1 is phosphorylated at Ser-498. Interacts with RTN1; RTN2; RTN3 and RTN4; the interaction leads to inhibition of amyloid precursor protein processing. Interacts with SNX6. Interacts with PCSK9. Interacts with NAT8 and NAT8B. Interacts with BIN1. Interacts (via extracellular domain) with ADAM10 (via extracellular domain). Interacts with SORL1; this interaction may affect binding with APP and hence reduce APP cleavage. Interacts with NRDC AND NRG1. N-Glycosylated. Addition of a bisecting N-acetylglucosamine by MGAT3 blocks lysosomal targeting, further degradation and is required for maintaining stability under stress conditions. In terms of processing, palmitoylation mediates lipid raft localization. Post-translationally, acetylated in the endoplasmic reticulum at Lys-126, Lys-275, Lys-279, Lys-285, Lys-299, Lys-300 and Lys-307. Acetylation by NAT8 and NAT8B is transient and deacetylation probably occurs in the Golgi. Acetylation regulates the maturation, the transport to the plasma membrane, the stability and the expression of the protein. Ubiquitinated at Lys-501, ubiquitination leads to lysosomal degradation. Monoubiquitinated and 'Lys-63'-linked polyubitinated. Deubiquitnated by USP8; inhibits lysosomal degradation. In terms of processing, phosphorylation at Ser-498 is required for interaction with GGA1 and retrograded transport from endosomal compartments to the trans-Golgi network. Non-phosphorylated BACE1 enters a direct recycling route to the cell surface. In terms of tissue distribution, expressed in the brain, specifically in neurons and astrocytes (at protein level).

The protein resides in the cell membrane. It is found in the golgi apparatus. Its subcellular location is the trans-Golgi network. It localises to the endoplasmic reticulum. The protein localises to the endosome. The protein resides in the late endosome. It is found in the early endosome. Its subcellular location is the cell surface. It localises to the cytoplasmic vesicle membrane. The protein localises to the membrane raft. The protein resides in the lysosome. It is found in the recycling endosome. Its subcellular location is the cell projection. It localises to the axon. The protein localises to the dendrite. The catalysed reaction is Broad endopeptidase specificity. Cleaves Glu-Val-Asn-Leu-|-Asp-Ala-Glu-Phe in the Swedish variant of Alzheimer's amyloid precursor protein.. Inhibited by RTN3 and RTN4. Responsible for the proteolytic processing of the amyloid precursor protein (APP). Cleaves at the N-terminus of the A-beta peptide sequence, between residues 671 and 672 of APP, leads to the generation and extracellular release of beta-cleaved soluble APP, and a corresponding cell-associated C-terminal fragment which is later released by gamma-secretase. Cleaves CHL1. The chain is Beta-secretase 1 from Mus musculus (Mouse).